Here is a 101-residue protein sequence, read N- to C-terminus: MTGSTIAPTTDYRNTTATGLKSALNLPQVHAFVNDWASLGMWWFSIALMFVCLIIMWLICCLKRRRARPPIYRPIIVLNPHNEKIHRLDGLKPCSLLLQYD.

N-linked (GlcNAc...) asparagine; by host glycosylation is present at Asn14. A helical transmembrane segment spans residues 41 to 62 (MWWFSIALMFVCLIIMWLICCL).

The protein belongs to the adenoviridae E3A-1 family. Post-translationally, N-glycosylated and probably also O-glycosylated.

The protein resides in the host nucleus membrane. This Human adenovirus C serotype 6 (HAdV-6) protein is Early E3A 11.6 kDa glycoprotein.